A 234-amino-acid polypeptide reads, in one-letter code: Ribosomal RNA small subunit methyltransferase G (234 aa).

Residues Gly-74, Phe-79, 125 to 126, and Arg-144 each bind S-adenosyl-L-methionine; that span reads AE.

The protein belongs to the methyltransferase superfamily. RNA methyltransferase RsmG family.

Its subcellular location is the cytoplasm. Specifically methylates the N7 position of a guanine in 16S rRNA. The polypeptide is Ribosomal RNA small subunit methyltransferase G (Roseiflexus sp. (strain RS-1)).